The following is a 254-amino-acid chain: Imidazole glycerol phosphate synthase subunit HisF (254 aa).

Catalysis depends on residues Asp-12 and Asp-131.

Belongs to the HisA/HisF family. In terms of assembly, heterodimer of HisH and HisF.

The protein localises to the cytoplasm. The catalysed reaction is 5-[(5-phospho-1-deoxy-D-ribulos-1-ylimino)methylamino]-1-(5-phospho-beta-D-ribosyl)imidazole-4-carboxamide + L-glutamine = D-erythro-1-(imidazol-4-yl)glycerol 3-phosphate + 5-amino-1-(5-phospho-beta-D-ribosyl)imidazole-4-carboxamide + L-glutamate + H(+). The protein operates within amino-acid biosynthesis; L-histidine biosynthesis; L-histidine from 5-phospho-alpha-D-ribose 1-diphosphate: step 5/9. IGPS catalyzes the conversion of PRFAR and glutamine to IGP, AICAR and glutamate. The HisF subunit catalyzes the cyclization activity that produces IGP and AICAR from PRFAR using the ammonia provided by the HisH subunit. The chain is Imidazole glycerol phosphate synthase subunit HisF from Desulfitobacterium hafniense (strain Y51).